We begin with the raw amino-acid sequence, 503 residues long: Aromatase 2 (503 aa).

Residue C437 participates in heme binding.

Belongs to the cytochrome P450 family. The cofactor is heme.

It localises to the membrane. The catalysed reaction is testosterone + 3 reduced [NADPH--hemoprotein reductase] + 3 O2 = 17beta-estradiol + formate + 3 oxidized [NADPH--hemoprotein reductase] + 4 H2O + 4 H(+). It carries out the reaction androst-4-ene-3,17-dione + 3 reduced [NADPH--hemoprotein reductase] + 3 O2 = estrone + formate + 3 oxidized [NADPH--hemoprotein reductase] + 4 H2O + 4 H(+). Functionally, catalyzes the formation of aromatic C18 estrogens from C19 androgens. The chain is Aromatase 2 (CYP19A2) from Sus scrofa (Pig).